The following is a 705-amino-acid chain: Choline transporter-like protein 2 (705 aa).

Residues 1 to 31 (MEDQRKYGAYGTPQKYDPTFKGPIYNRGCTD) are Cytoplasmic-facing. T12 bears the Phosphothreonine mark. A helical transmembrane segment spans residues 32 to 52 (VLCCVLLFLAIVGYVAVGLIA). Over 53–231 (WTHGDPRKVI…RIFEDYTVSW (179 aa)) the chain is Extracellular. Residues N186 and N199 are each glycosylated (N-linked (GlcNAc...) asparagine). A helical membrane pass occupies residues 232-252 (YWIVIGLVIAMVLSLLFIILL). Topologically, residues 253–255 (RFL) are cytoplasmic. The helical transmembrane segment at 256–276 (AGIMVWVMIVLVILVLGYGIF) threads the bilayer. Over 277 to 314 (HCYMEYARLRGEAGSDISVLDLGFQTDFRVYLHLRQTW) the chain is Extracellular. A helical transmembrane segment spans residues 315–335 (LAFMIILSILEVIIILLLIFL). The Cytoplasmic segment spans residues 336-363 (RKRILIAIALIKEASRAVGYVMCSLLYP). A helical transmembrane segment spans residues 364 to 384 (LVTFFLLCLCIAYWASTAVFL). At 385-455 (STSNEAVYKI…IFNAFMFFWL (71 aa)) the chain is on the extracellular side. N414 is a glycosylation site (N-linked (GlcNAc...) asparagine). Residues 456 to 478 (ANFVLALGQVTLAGAFASYYWAL) traverse the membrane as a helical segment. At 479-503 (RKPDDMPAFPLFAAFGRALRYHTGS) the chain is on the cytoplasmic side. The chain crosses the membrane as a helical span at residues 504-524 (LAFGSLILAIVQIIRVILEYL). At 525-562 (DQRLKAAENKFAKFLMTCLKCCFWCLEKFIKFLNRNAY) the chain is on the extracellular side. The helical transmembrane segment at 563–583 (IMIAIYGTNFCTSARNAFFLL) threads the bilayer. Residues 584-598 (MRNIIRVAVLDKVTD) lie on the Cytoplasmic side of the membrane. Residues 599–619 (FLFLLGKLLIVGSVGILAFFF) form a helical membrane-spanning segment. At 620–637 (FTHRIRIVQDTAPPLNYY) the chain is on the extracellular side. Residues 638 to 658 (WVPILTVIVGSYLIAHGFFSV) traverse the membrane as a helical segment. Over 659–705 (YGMCVDTLFLCFLEDLERNNGSSERPYFMSSTLKKLLNKTNKKPVES) the chain is Cytoplasmic.

The protein belongs to the CTL (choline transporter-like) family. As to quaternary structure, interacts with COCH. Post-translationally, N-glycosylated; contains sialic acid. Not O-glycosylated. Expressed at high levels in lung, colon and in supporting cells of the inner ear (at protein level). Progressively lower levels in brain, tongue, liver and kidney (at protein level). In the tongue, strongly expressed in epithelial cells and in nerves within the musculature. Within the nerves, expression observed in the perineurial cells of the nerve sheath, in the Schwann cells and myelinated nerve fibers (at protein level). In the kidney, prominent expression in glomeruli in the lining of Bowman's capsule and on the mesangial cells adjacent to the vessels within the glomerulus (at protein level). Strongly expressed on the membranes of splenocytes (at protein level).

It is found in the cell membrane. Its subcellular location is the mitochondrion outer membrane. The catalysed reaction is choline(out) + n H(+)(in) = choline(in) + n H(+)(out). It catalyses the reaction ethanolamine(out) + n H(+)(in) = ethanolamine(in) + n H(+)(out). In terms of biological role, choline/H+ antiporter, mainly in mitochodria. Also acts as a low-affinity ethanolamine/H+ antiporter, regulating the supply of extracellular ethanolamine (Etn) for the CDP-Etn pathway, redistribute intracellular Etn and balance the CDP-Cho and CDP-Etn arms of the Kennedy pathway. The sequence is that of Choline transporter-like protein 2 (SLC44A2) from Cavia porcellus (Guinea pig).